Reading from the N-terminus, the 433-residue chain is Serine--tRNA ligase (433 aa).

235–237 is an L-serine binding site; the sequence is TSE. An ATP-binding site is contributed by 266–268; the sequence is RSE. E289 lines the L-serine pocket. Residue 353–356 participates in ATP binding; sequence EISS. Residue S388 participates in L-serine binding.

This sequence belongs to the class-II aminoacyl-tRNA synthetase family. Type-1 seryl-tRNA synthetase subfamily. As to quaternary structure, homodimer. The tRNA molecule binds across the dimer.

The protein resides in the cytoplasm. The enzyme catalyses tRNA(Ser) + L-serine + ATP = L-seryl-tRNA(Ser) + AMP + diphosphate + H(+). It carries out the reaction tRNA(Sec) + L-serine + ATP = L-seryl-tRNA(Sec) + AMP + diphosphate + H(+). Its pathway is aminoacyl-tRNA biosynthesis; selenocysteinyl-tRNA(Sec) biosynthesis; L-seryl-tRNA(Sec) from L-serine and tRNA(Sec): step 1/1. Its function is as follows. Catalyzes the attachment of serine to tRNA(Ser). Is also able to aminoacylate tRNA(Sec) with serine, to form the misacylated tRNA L-seryl-tRNA(Sec), which will be further converted into selenocysteinyl-tRNA(Sec). This chain is Serine--tRNA ligase, found in Burkholderia cepacia (Pseudomonas cepacia).